The primary structure comprises 352 residues: Probable dual-specificity RNA methyltransferase RlmN (352 aa).

Catalysis depends on E93, which acts as the Proton acceptor. The 235-residue stretch at 99–333 (FNYGYSVCVT…IRLERGSSID (235 aa)) folds into the Radical SAM core domain. C106 and C336 are disulfide-bonded. [4Fe-4S] cluster is bound by residues C113, C117, and C120. Residues 164–165 (GE), S196, and N295 contribute to the S-adenosyl-L-methionine site. The S-methylcysteine intermediate role is filled by C336.

This sequence belongs to the radical SAM superfamily. RlmN family. Requires [4Fe-4S] cluster as cofactor.

It localises to the cytoplasm. It carries out the reaction adenosine(2503) in 23S rRNA + 2 reduced [2Fe-2S]-[ferredoxin] + 2 S-adenosyl-L-methionine = 2-methyladenosine(2503) in 23S rRNA + 5'-deoxyadenosine + L-methionine + 2 oxidized [2Fe-2S]-[ferredoxin] + S-adenosyl-L-homocysteine. It catalyses the reaction adenosine(37) in tRNA + 2 reduced [2Fe-2S]-[ferredoxin] + 2 S-adenosyl-L-methionine = 2-methyladenosine(37) in tRNA + 5'-deoxyadenosine + L-methionine + 2 oxidized [2Fe-2S]-[ferredoxin] + S-adenosyl-L-homocysteine. Specifically methylates position 2 of adenine 2503 in 23S rRNA and position 2 of adenine 37 in tRNAs. The polypeptide is Probable dual-specificity RNA methyltransferase RlmN (Malacoplasma penetrans (strain HF-2) (Mycoplasma penetrans)).